The primary structure comprises 212 residues: FMN-dependent NAD(P)H:quinone oxidoreductase 1 (212 aa).

Residues S10, 16-18 (SQS), and 97-100 (MYNF) each bind FMN. Substrate-binding residues include N99 and Y131. FMN is bound by residues 145 to 148 (SRGG) and E187. A substrate-binding site is contributed by E188.

It belongs to the azoreductase type 1 family. In terms of assembly, homodimer. Homotetramer formed by a dimer of dimers when the ionic strength is high. Requires FMN as cofactor.

The enzyme catalyses 2 a quinone + NADPH + H(+) = 2 a 1,4-benzosemiquinone + NADP(+). It catalyses the reaction 2 a quinone + NADH + H(+) = 2 a 1,4-benzosemiquinone + NAD(+). The catalysed reaction is N,N-dimethyl-1,4-phenylenediamine + anthranilate + 2 NAD(+) = 2-(4-dimethylaminophenyl)diazenylbenzoate + 2 NADH + 2 H(+). Azoreductase activity increases with salt strength. Functionally, quinone reductase that provides resistance to thiol-specific stress caused by electrophilic quinones. Shows a preference for benzoquinones. Its function is as follows. Also exhibits azoreductase activity. Catalyzes the reductive cleavage of the azo bond in aromatic azo compounds to the corresponding amines. NADPH is the preferred electron donor for azoreductase activity, but it can also use NADH. Can reduce different classes of azo dyes, including the common azo dyes methyl red and p-aminoazobenzene sulfonamide (PAABSA). Can activate several azo pro-drugs used in the treatment of inflammatory bowel disease (IBD), including balsalazide, sulfasalazine and olsalazine. Also acts as a nitrodeductase, and can reduce and hence activate the nitroaromatic drug nitrofurazone, a broad spectrum antibiotic. This chain is FMN-dependent NAD(P)H:quinone oxidoreductase 1, found in Pseudomonas aeruginosa (strain ATCC 15692 / DSM 22644 / CIP 104116 / JCM 14847 / LMG 12228 / 1C / PRS 101 / PAO1).